The following is a 257-amino-acid chain: Adenosylcobinamide-GDP ribazoletransferase (257 aa).

Transmembrane regions (helical) follow at residues glutamine 7 to valine 27, arginine 39 to threonine 59, glycine 61 to glycine 81, isoleucine 113 to serine 133, valine 143 to phenylalanine 163, and valine 196 to leucine 216.

Belongs to the CobS family. Mg(2+) serves as cofactor.

The protein resides in the cell inner membrane. It catalyses the reaction alpha-ribazole + adenosylcob(III)inamide-GDP = adenosylcob(III)alamin + GMP + H(+). It carries out the reaction alpha-ribazole 5'-phosphate + adenosylcob(III)inamide-GDP = adenosylcob(III)alamin 5'-phosphate + GMP + H(+). It functions in the pathway cofactor biosynthesis; adenosylcobalamin biosynthesis; adenosylcobalamin from cob(II)yrinate a,c-diamide: step 7/7. Functionally, joins adenosylcobinamide-GDP and alpha-ribazole to generate adenosylcobalamin (Ado-cobalamin). Also synthesizes adenosylcobalamin 5'-phosphate from adenosylcobinamide-GDP and alpha-ribazole 5'-phosphate. The protein is Adenosylcobinamide-GDP ribazoletransferase of Shewanella woodyi (strain ATCC 51908 / MS32).